We begin with the raw amino-acid sequence, 102 residues long: Small ribosomal subunit protein uS10 (102 aa).

Belongs to the universal ribosomal protein uS10 family. As to quaternary structure, part of the 30S ribosomal subunit.

Its function is as follows. Involved in the binding of tRNA to the ribosomes. This is Small ribosomal subunit protein uS10 from Streptococcus thermophilus (strain CNRZ 1066).